We begin with the raw amino-acid sequence, 114 residues long: Large ribosomal subunit protein uL22 (114 aa).

It belongs to the universal ribosomal protein uL22 family. In terms of assembly, part of the 50S ribosomal subunit.

Functionally, this protein binds specifically to 23S rRNA; its binding is stimulated by other ribosomal proteins, e.g. L4, L17, and L20. It is important during the early stages of 50S assembly. It makes multiple contacts with different domains of the 23S rRNA in the assembled 50S subunit and ribosome. Its function is as follows. The globular domain of the protein is located near the polypeptide exit tunnel on the outside of the subunit, while an extended beta-hairpin is found that lines the wall of the exit tunnel in the center of the 70S ribosome. This is Large ribosomal subunit protein uL22 from Lysinibacillus sphaericus (strain C3-41).